Reading from the N-terminus, the 363-residue chain is Probable cinnamyl alcohol dehydrogenase 6 (363 aa).

C51 lines the Zn(2+) pocket. S53 is a binding site for NADP(+). Residues H73, E74, C104, C107, C110, C118, and C167 each contribute to the Zn(2+) site. Residues S171, G192–G197, S215–K220, T255, G279, and S302–I304 each bind NADP(+).

It belongs to the zinc-containing alcohol dehydrogenase family. As to quaternary structure, homodimer. Requires Zn(2+) as cofactor. Expressed in the primary and lateral roots, and root caps. Expressed in the hypocotyl, cotyledon veins and hydathodes. In stems, expressed in the vascular cambium, interfascicular cambium and developing xylem. Expressed in the style, anthers, stamen filaments, vascular tissues of sepals, stigmatic regions in flowers, and abscission and style regions of siliques.

The enzyme catalyses (E)-cinnamyl alcohol + NADP(+) = (E)-cinnamaldehyde + NADPH + H(+). It carries out the reaction (E)-coniferol + NADP(+) = (E)-coniferaldehyde + NADPH + H(+). The catalysed reaction is (E)-sinapyl alcohol + NADP(+) = (E)-sinapaldehyde + NADPH + H(+). It catalyses the reaction (E)-4-coumaroyl alcohol + NADP(+) = (E)-4-coumaraldehyde + NADPH + H(+). The enzyme catalyses (E)-caffeyl alcohol + NADP(+) = (E)-caffeyl aldehyde + NADPH + H(+). The protein operates within aromatic compound metabolism; phenylpropanoid biosynthesis. In terms of biological role, involved in lignin biosynthesis. Catalyzes the final step specific for the production of lignin monomers. Catalyzes the NADPH-dependent reduction of coniferaldehyde, 5-hydroxyconiferaldehyde, sinapaldehyde, 4-coumaraldehyde and caffeyl aldehyde to their respective alcohols. The protein is Probable cinnamyl alcohol dehydrogenase 6 (CAD6) of Arabidopsis thaliana (Mouse-ear cress).